The sequence spans 155 residues: Small ribosomal subunit protein uS7 (155 aa).

The protein belongs to the universal ribosomal protein uS7 family. As to quaternary structure, part of the 30S ribosomal subunit. Contacts proteins S9 and S11.

One of the primary rRNA binding proteins, it binds directly to 16S rRNA where it nucleates assembly of the head domain of the 30S subunit. Is located at the subunit interface close to the decoding center, probably blocks exit of the E-site tRNA. This Thermotoga petrophila (strain ATCC BAA-488 / DSM 13995 / JCM 10881 / RKU-1) protein is Small ribosomal subunit protein uS7.